Reading from the N-terminus, the 645-residue chain is Rho GTPase-activating protein 25 (645 aa).

Positions Arg-46 to Gly-151 constitute a PH domain. One can recognise a Rho-GAP domain in the interval Gln-159–Phe-353. Disordered regions lie at residues Lys-355–Pro-444 and Phe-469–Ile-550. Residues Ser-362 and Ser-395 each carry the phosphoserine modification. Over residues Thr-393–Thr-409 the composition is skewed to low complexity. Thr-406 is subject to Phosphothreonine. The span at Asp-420–Asp-431 shows a compositional bias: basic and acidic residues. Polar residues predominate over residues Ser-487–Asn-504. Position 536 is a phosphoserine (Ser-536). A coiled-coil region spans residues Gly-541 to Glu-644.

GTPase activator for the Rho-type GTPases by converting them to an inactive GDP-bound state. The chain is Rho GTPase-activating protein 25 (ARHGAP25) from Homo sapiens (Human).